Here is a 245-residue protein sequence, read N- to C-terminus: 1-(5-phosphoribosyl)-5-[(5-phosphoribosylamino)methylideneamino] imidazole-4-carboxamide isomerase (245 aa).

Residue aspartate 7 is the Proton acceptor of the active site. The active-site Proton donor is the aspartate 129.

It belongs to the HisA/HisF family.

The protein resides in the cytoplasm. The catalysed reaction is 1-(5-phospho-beta-D-ribosyl)-5-[(5-phospho-beta-D-ribosylamino)methylideneamino]imidazole-4-carboxamide = 5-[(5-phospho-1-deoxy-D-ribulos-1-ylimino)methylamino]-1-(5-phospho-beta-D-ribosyl)imidazole-4-carboxamide. It participates in amino-acid biosynthesis; L-histidine biosynthesis; L-histidine from 5-phospho-alpha-D-ribose 1-diphosphate: step 4/9. In Escherichia coli O127:H6 (strain E2348/69 / EPEC), this protein is 1-(5-phosphoribosyl)-5-[(5-phosphoribosylamino)methylideneamino] imidazole-4-carboxamide isomerase.